Here is a 217-residue protein sequence, read N- to C-terminus: ATP-binding protein BexA (217 aa).

In terms of domain architecture, ABC transporter spans 2-217; sequence IRVNNVCKKY…AYQYYNETQK (216 aa). 38 to 45 contributes to the ATP binding site; sequence GRNGAGKS.

It belongs to the ABC transporter superfamily.

It is found in the cell inner membrane. Functionally, putative ATP-binding protein, and an energy-coupling component of capsule polysaccharide export apparatus. In Haemophilus influenzae, this protein is ATP-binding protein BexA (bexA).